The following is a 364-amino-acid chain: Alanine racemase (364 aa).

The active-site Proton acceptor; specific for D-alanine is the Lys-34. Lys-34 carries the post-translational modification N6-(pyridoxal phosphate)lysine. Position 129 (Arg-129) interacts with substrate. Catalysis depends on Tyr-259, which acts as the Proton acceptor; specific for L-alanine. Met-307 provides a ligand contact to substrate.

The protein belongs to the alanine racemase family. Pyridoxal 5'-phosphate serves as cofactor.

It carries out the reaction L-alanine = D-alanine. It participates in amino-acid biosynthesis; D-alanine biosynthesis; D-alanine from L-alanine: step 1/1. Its function is as follows. Catalyzes the interconversion of L-alanine and D-alanine. May also act on other amino acids. The chain is Alanine racemase (alr) from Coxiella burnetii (strain Dugway 5J108-111).